A 466-amino-acid chain; its full sequence is UDP-glycosyltransferase 91B1 (466 aa).

UDP-alpha-D-glucose-binding positions include Thr-286, 342 to 344 (VPQ), 359 to 367 (HCGWGSAVE), and 381 to 384 (NLDQ).

It belongs to the UDP-glycosyltransferase family.

This is UDP-glycosyltransferase 91B1 (UGT91B1) from Arabidopsis thaliana (Mouse-ear cress).